Reading from the N-terminus, the 127-residue chain is Glycine cleavage system H protein (127 aa).

A Lipoyl-binding domain is found at 22–104 (NVRIGITDYA…YDKAWMIVVK (83 aa)). Residue Lys-63 is modified to N6-lipoyllysine.

This sequence belongs to the GcvH family. In terms of assembly, the glycine cleavage system is composed of four proteins: P, T, L and H. (R)-lipoate is required as a cofactor.

In terms of biological role, the glycine cleavage system catalyzes the degradation of glycine. The H protein shuttles the methylamine group of glycine from the P protein to the T protein. Functionally, is also involved in protein lipoylation via its role as an octanoyl/lipoyl carrier protein intermediate. This is Glycine cleavage system H protein from Geobacillus kaustophilus (strain HTA426).